Reading from the N-terminus, the 497-residue chain is Probable cytosol aminopeptidase (497 aa).

Mn(2+) is bound by residues Lys-264 and Asp-269. Lys-276 is an active-site residue. Residues Asp-287, Asp-346, and Glu-348 each coordinate Mn(2+). Residue Arg-350 is part of the active site.

The protein belongs to the peptidase M17 family. Requires Mn(2+) as cofactor.

It is found in the cytoplasm. It carries out the reaction Release of an N-terminal amino acid, Xaa-|-Yaa-, in which Xaa is preferably Leu, but may be other amino acids including Pro although not Arg or Lys, and Yaa may be Pro. Amino acid amides and methyl esters are also readily hydrolyzed, but rates on arylamides are exceedingly low.. The enzyme catalyses Release of an N-terminal amino acid, preferentially leucine, but not glutamic or aspartic acids.. Presumably involved in the processing and regular turnover of intracellular proteins. Catalyzes the removal of unsubstituted N-terminal amino acids from various peptides. This Persephonella marina (strain DSM 14350 / EX-H1) protein is Probable cytosol aminopeptidase.